The sequence spans 282 residues: 3-methyl-2-oxobutanoate hydroxymethyltransferase (282 aa).

Mg(2+)-binding residues include D44 and D83. Residues 44 to 45, D83, and K112 each bind 3-methyl-2-oxobutanoate; that span reads DS. A Mg(2+)-binding site is contributed by E114. E181 acts as the Proton acceptor in catalysis.

It belongs to the PanB family. As to quaternary structure, homodecamer; pentamer of dimers. Mg(2+) is required as a cofactor.

The protein localises to the cytoplasm. The catalysed reaction is 3-methyl-2-oxobutanoate + (6R)-5,10-methylene-5,6,7,8-tetrahydrofolate + H2O = 2-dehydropantoate + (6S)-5,6,7,8-tetrahydrofolate. It functions in the pathway cofactor biosynthesis; coenzyme A biosynthesis. In terms of biological role, catalyzes the reversible reaction in which hydroxymethyl group from 5,10-methylenetetrahydrofolate is transferred onto alpha-ketoisovalerate to form ketopantoate. This is 3-methyl-2-oxobutanoate hydroxymethyltransferase from Pyrococcus abyssi (strain GE5 / Orsay).